A 276-amino-acid polypeptide reads, in one-letter code: Tryptase beta-2 (276 aa).

The signal sequence occupies residues 1–21 (MLKRRLLLLWALSLLASLVYS). A propeptide spans 22 to 31 (APRPANQRVG) (activation peptide). Positions 32–273 (IVGGHEASES…YLDWIHRYVP (242 aa)) constitute a Peptidase S1 domain. A disulfide bond links Cys-60 and Cys-76. The active-site Charge relay system is the His-75. At Tyr-98 the chain carries Phosphotyrosine. Residue Asp-122 is the Charge relay system of the active site. Asn-133 carries an N-linked (GlcNAc...) asparagine glycan. Cystine bridges form between Cys-156–Cys-231, Cys-189–Cys-212, and Cys-221–Cys-249. Ser-225 functions as the Charge relay system in the catalytic mechanism.

The protein belongs to the peptidase S1 family. Tryptase subfamily. Homotetramer. The active tetramer is converted to inactive monomers at neutral and acidic pH in the absence of heparin. Low concentrations of inactive monomers become active monomers at pH 6.0 in the presence of heparin. When the concentration of active monomers is higher, they convert to active monomers and then to active tetramers. These monomers are active and functionally distinct from the tetrameric enzyme. In contrast to the hidden active sites in the tetrameric form, the active site of the monomeric form is accessible for macromolecular proteins and inhibitors, e.g. fibrinogen which is a substrate for the monomeric but not for the tetrameric form. The monomeric form forms a complex with SERPINB6. As to expression, during embryogenesis, detected primarily in skin.

The protein localises to the secreted. The catalysed reaction is Preferential cleavage: Arg-|-Xaa, Lys-|-Xaa, but with more restricted specificity than trypsin.. Tryptase is the major neutral protease present in mast cells and is secreted upon the coupled activation-degranulation response of this cell type. Plays a role in innate immunity. The chain is Tryptase beta-2 (Tpsb2) from Mus musculus (Mouse).